Here is a 116-residue protein sequence, read N- to C-terminus: MLPNQNRLRRREDFAKVYAKGDRYRGTYLSLKILFDSNTTYTRIGIVVSKKVSKLAVTRNRFKRQLRAIFRQLLSQLKDGLQIVVTVTTVASKPNYQELGDDLKNILAKAKVLHGN.

Belongs to the RnpA family. As to quaternary structure, consists of a catalytic RNA component (M1 or rnpB) and a protein subunit.

It carries out the reaction Endonucleolytic cleavage of RNA, removing 5'-extranucleotides from tRNA precursor.. In terms of biological role, RNaseP catalyzes the removal of the 5'-leader sequence from pre-tRNA to produce the mature 5'-terminus. It can also cleave other RNA substrates such as 4.5S RNA. The protein component plays an auxiliary but essential role in vivo by binding to the 5'-leader sequence and broadening the substrate specificity of the ribozyme. The protein is Ribonuclease P protein component of Pseudanabaena sp. (strain PCC 6903).